The sequence spans 185 residues: Elongation factor P (185 aa).

This sequence belongs to the elongation factor P family.

The protein localises to the cytoplasm. The protein operates within protein biosynthesis; polypeptide chain elongation. Its function is as follows. Involved in peptide bond synthesis. Stimulates efficient translation and peptide-bond synthesis on native or reconstituted 70S ribosomes in vitro. Probably functions indirectly by altering the affinity of the ribosome for aminoacyl-tRNA, thus increasing their reactivity as acceptors for peptidyl transferase. In Mesomycoplasma hyopneumoniae (strain 232) (Mycoplasma hyopneumoniae), this protein is Elongation factor P.